We begin with the raw amino-acid sequence, 416 residues long: UDP-N-acetylglucosamine 1-carboxyvinyltransferase (416 aa).

Residue 22 to 23 (KN) coordinates phosphoenolpyruvate. Arg92 lines the UDP-N-acetyl-alpha-D-glucosamine pocket. The active-site Proton donor is the Cys116. Residue Cys116 is modified to 2-(S-cysteinyl)pyruvic acid O-phosphothioketal. Residues 121 to 125 (RPVDQ), Asp304, and Ile326 each bind UDP-N-acetyl-alpha-D-glucosamine.

This sequence belongs to the EPSP synthase family. MurA subfamily.

The protein localises to the cytoplasm. It catalyses the reaction phosphoenolpyruvate + UDP-N-acetyl-alpha-D-glucosamine = UDP-N-acetyl-3-O-(1-carboxyvinyl)-alpha-D-glucosamine + phosphate. It participates in cell wall biogenesis; peptidoglycan biosynthesis. Its function is as follows. Cell wall formation. Adds enolpyruvyl to UDP-N-acetylglucosamine. In Cupriavidus necator (strain ATCC 17699 / DSM 428 / KCTC 22496 / NCIMB 10442 / H16 / Stanier 337) (Ralstonia eutropha), this protein is UDP-N-acetylglucosamine 1-carboxyvinyltransferase.